A 384-amino-acid chain; its full sequence is Putative odorant receptor 98b (384 aa).

The Cytoplasmic portion of the chain corresponds to 1 to 34 (MLTDKFLRLQSALFRLLGLELLHEQDVGHRYPWR). Residues 35 to 55 (SICCILSVASFMPLTIAFGLQ) traverse the membrane as a helical segment. Residues 56 to 66 (NVQNVEQLTDS) lie on the Extracellular side of the membrane. Residues 67–87 (LCSVLVDLLALCKIGLFLWLY) form a helical membrane-spanning segment. Residues 88–128 (KDFKFLIGQFYCVLQTETHTAVAEMIVTRESRRDQFISAMY) lie on the Cytoplasmic side of the membrane. Residues 129-149 (AYCFITAGLSACLMSPLSMLI) traverse the membrane as a helical segment. At 150 to 177 (SYQRTGELQPKFPFPSVYPWDNMKLSNY) the chain is on the extracellular side. Residues 178–198 (IISYFWNVCAALGVALPTVCV) form a helical membrane-spanning segment. The Cytoplasmic segment spans residues 199–258 (DTLFCSLSHNLCALFQIARHKMMHFEGRNTKETHENLKHVFQLYALCLNLGHFLNEYFRP). The chain crosses the membrane as a helical span at residues 259 to 279 (LICQFVAASLHLCVLCYQLSA). Residues 280 to 284 (NILQP) lie on the Extracellular side of the membrane. The helical transmembrane segment at 285–305 (ALLFYAAFTAAVVGQVSIYCF) threads the bilayer. At 306 to 329 (CGSSIHSECQLFGQAIYESSWPHL) the chain is on the cytoplasmic side. A helical transmembrane segment spans residues 330–350 (LQENLQLVSSLKIAMMRSSLG). The Extracellular portion of the chain corresponds to 351–384 (CPIDGYFFEANRETLITVSKAFIKVSKKTPQVND).

This sequence belongs to the insect chemoreceptor superfamily. Heteromeric odorant receptor channel (TC 1.A.69) family. Or1a subfamily. Interacts with Orco. Complexes exist early in the endomembrane system in olfactory sensory neurons (OSNs), coupling these complexes to the conserved ciliary trafficking pathway.

The protein localises to the cell membrane. Odorant receptor which mediates acceptance or avoidance behavior, depending on its substrates. The odorant receptor repertoire encodes a large collection of odor stimuli that vary widely in identity, intensity, and duration. May form a complex with Orco to form odorant-sensing units, providing sensitive and prolonged odorant signaling and calcium permeability. This chain is Putative odorant receptor 98b (Or98b), found in Drosophila melanogaster (Fruit fly).